Consider the following 229-residue polypeptide: MSQPRPLLSPPETEEQLLAQAQQLSGYTLGELAALDGLVTPENLKRDKGWIGVLLEIWLGASAGSKPEQDFAALGVELKTIPVDSLGRPLETTFVCVARLTGNSGVTWETSHVRHKLKRVLWIPVEGERSIPLAQRRVGSPLLWSPNEEEDRQLREDWEELMDMIVLGQVERITARHGEYLQIRPKAANAKALTEAIGARGERILTLPRGFYLKKNFTSALLARHFLIQ.

This sequence belongs to the MutH family.

It is found in the cytoplasm. In terms of biological role, sequence-specific endonuclease that cleaves unmethylated GATC sequences. It is involved in DNA mismatch repair. The polypeptide is DNA mismatch repair protein MutH (Shigella flexneri serotype 5b (strain 8401)).